We begin with the raw amino-acid sequence, 413 residues long: Serine/threonine-protein kinase ppk27 (413 aa).

Residues Trp-102–Phe-403 enclose the Protein kinase domain. ATP contacts are provided by residues Ile-108–Val-116 and Lys-133. The Proton acceptor role is filled by Asp-231.

Belongs to the protein kinase superfamily. Ser/Thr protein kinase family.

Its subcellular location is the cytoplasm. It catalyses the reaction L-seryl-[protein] + ATP = O-phospho-L-seryl-[protein] + ADP + H(+). It carries out the reaction L-threonyl-[protein] + ATP = O-phospho-L-threonyl-[protein] + ADP + H(+). The chain is Serine/threonine-protein kinase ppk27 (ppk27) from Schizosaccharomyces pombe (strain 972 / ATCC 24843) (Fission yeast).